Reading from the N-terminus, the 248-residue chain is MEAVILFPAIDLKNGQCVRLEQGDMARATVFNLDPAAQARSFQDQGFEYLHVVDLDGAFAGKPQNAQAVEAMLKTVTMPVQLGGGIRDMATLQAWLDKGIARVIIGTAAVRDPAFVKEAAKKHPGRVAVGLDARDGKVAVEGWAETSTVTALEIAQRFEDAGVAAIIFTDIARDGLLKGLNLDATIALADAISIPVIASGGLASIDDVKALLTPRAKKLEGAISGRALYDGRIDPAEALALIKAARAA.

D11 acts as the Proton acceptor in catalysis. The active-site Proton donor is the D132.

The protein belongs to the HisA/HisF family.

The protein localises to the cytoplasm. It catalyses the reaction 1-(5-phospho-beta-D-ribosyl)-5-[(5-phospho-beta-D-ribosylamino)methylideneamino]imidazole-4-carboxamide = 5-[(5-phospho-1-deoxy-D-ribulos-1-ylimino)methylamino]-1-(5-phospho-beta-D-ribosyl)imidazole-4-carboxamide. It functions in the pathway amino-acid biosynthesis; L-histidine biosynthesis; L-histidine from 5-phospho-alpha-D-ribose 1-diphosphate: step 4/9. In Afipia carboxidovorans (strain ATCC 49405 / DSM 1227 / KCTC 32145 / OM5) (Oligotropha carboxidovorans), this protein is 1-(5-phosphoribosyl)-5-[(5-phosphoribosylamino)methylideneamino] imidazole-4-carboxamide isomerase.